Consider the following 390-residue polypeptide: Odorant receptor 85b (390 aa).

Residues 1-30 (MEKLMKYASFFYTAVGIRPYTNGEESKMNK) are Cytoplasmic-facing. The helical transmembrane segment at 31-51 (LIFHIVFWSNVINLSFVGLFE) threads the bilayer. At 52-66 (SIYVYSAFMDNKFLE) the chain is on the extracellular side. Residues 67–87 (AVTALSYIGFVTVGMSKMFFI) traverse the membrane as a helical segment. At 88 to 126 (RWKKTAITELINELKEIYPNGLIREERYNLPMYLGTCSR) the chain is on the cytoplasmic side. The chain crosses the membrane as a helical span at residues 127–147 (ISLIYSLLYSVLIWTFNLFCV). Residues 148 to 200 (MEYWVYDKWLNIRVVGKQLPYLMYIPWKWQDNWSYYPLLFSQNFAGYTSAAGQ) are Extracellular-facing. Residue asparagine 179 is glycosylated (N-linked (GlcNAc...) asparagine). The helical transmembrane segment at 201 to 221 (ISTDVLLCAVATQLVMHFDFL) threads the bilayer. Topologically, residues 222 to 260 (SNSMERHELSGDWKKDSRFLVDIVRYHERILRLSDAVND) are cytoplasmic. The helical transmembrane segment at 261 to 281 (IFGIPLLLNFMVSSFVICFVG) threads the bilayer. Over 282–291 (FQMTVGVPPD) the chain is Extracellular. A helical membrane pass occupies residues 292 to 312 (IVVKLFLFLVSSMSQVYLICH). At 313 to 360 (YGQLVADASYGFSVATYNQKWYKADVRYKRALVIIIARSQKVTFLKAT) the chain is on the cytoplasmic side. Residues 361 to 381 (IFLDITRSTMTDLLQISYKFF) form a helical membrane-spanning segment. The Extracellular segment spans residues 382–390 (ALLRTMYTQ).

It belongs to the insect chemoreceptor superfamily. Heteromeric odorant receptor channel (TC 1.A.69) family. Or49a subfamily. In terms of assembly, interacts with Orco. Complexes exist early in the endomembrane system in olfactory sensory neurons (OSNs), coupling these complexes to the conserved ciliary trafficking pathway. In terms of tissue distribution, expressed in olfactory sensory neurons in the antenna.

It is found in the cell membrane. Functionally, odorant receptor which mediates acceptance or avoidance behavior, depending on its substrates. The odorant receptor repertoire encodes a large collection of odor stimuli that vary widely in identity, intensity, and duration. Forms a complex with Orco to form odorant-sensing units, providing sensitive and prolonged odorant signaling and calcium permeability. Involved in the behavioral responses to 2-heptanone, amyl acetate, and butyl acetate. In Drosophila melanogaster (Fruit fly), this protein is Odorant receptor 85b (Or85b).